We begin with the raw amino-acid sequence, 462 residues long: Ubiquitin carboxyl-terminal hydrolase calypso (462 aa).

The region spanning 29-260 (GWLELESDPG…IRFNLMAVVP (232 aa)) is the UCH catalytic domain. Cysteine 115 acts as the Nucleophile in catalysis. Histidine 197 functions as the Proton donor in the catalytic mechanism. Residues 357–385 (NYDKFICTFLSMLAHQGVLGELVSQHLLP) form the ULD domain. A positively charged C-terminal tail required for binding nucleosomes region spans residues 387–462 (KKIANRLNRQ…KGRNKCRKRK (76 aa)). The segment covering 413-447 (GTNAAGSKSQQQQQQTQQQPQQTQTAKNGKSPGKT) has biased composition (low complexity). A disordered region spans residues 413–462 (GTNAAGSKSQQQQQQTQQQPQQTQTAKNGKSPGKTPGRRRKGRNKCRKRK). Residues 448-462 (PGRRRKGRNKCRKRK) show a composition bias toward basic residues.

It belongs to the peptidase C12 family. BAP1 subfamily. In terms of assembly, catalytic component of the polycomb repressive deubiquitinase (PR-DUB) complex, at least composed of caly/calypso, Asx and sba (MBD5/6 homolog). The PR-DUB complex associates with nucleosomes to mediate deubiquitination of histone H2AK118ub1 substrates; the association requires the positively charged C-terminal tail of caly, probably due to direct binding of DNA. Interacts (via ULD domain) with Asx (via DEUBAD domain); the interaction produces a stable heterodimer with a composite binding site for ubiquitin. Homodimerizes (via coiled-coil hinge-region between the UCH and ULD domains) to mediate assembly of 2 copies of the caly-Asx heterodimer into a bisymmetric tetramer; dimerization enhances PR-DUB association with nucleosomes.

The protein localises to the nucleus. It carries out the reaction Thiol-dependent hydrolysis of ester, thioester, amide, peptide and isopeptide bonds formed by the C-terminal Gly of ubiquitin (a 76-residue protein attached to proteins as an intracellular targeting signal).. In terms of biological role, catalytic component of the polycomb repressive deubiquitinase (PR-DUB) complex, a complex that specifically mediates deubiquitination of histone H2A monoubiquitinated at 'Lys-119' (H2AK118ub1). Mediates bisymmetric organization of the PR-DUB complex and is involved in association with nucleosomes to mediate deubiquitination. Does not deubiquitinate monoubiquitinated histone H2B. Required to maintain the transcriptionally repressive state of homeotic genes throughout development. The PR-DUB complex has weak or no activity toward 'Lys-48'- and 'Lys-63'-linked polyubiquitin chains. Polycomb group (PcG) protein. This is Ubiquitin carboxyl-terminal hydrolase calypso from Drosophila grimshawi (Hawaiian fruit fly).